The primary structure comprises 386 residues: Ferredoxin--NADP reductase (386 aa).

A CpcD-like domain is found at 9–67 (SRMFRYEVVGLRQTAETEKTNYAIRNSGSQFFNVPYDRMNQFMQQITRWGGKIVSIQPL). Residues 104-228 (NNPCIGKVIS…TGPVGKEMLL (125 aa)) enclose the FAD-binding FR-type domain. FAD-binding positions include 163–166 (RLYS), 184–186 (CVR), Y190, 202–204 (VCS), and T243. S166 and R186 together coordinate NADP(+). NADP(+) contacts are provided by residues T243, 275–276 (VA), 305–306 (SR), 315–319 (KMYIQ), 344–345 (GL), and E384.

The protein belongs to the ferredoxin--NADP reductase type 1 family. The cofactor is FAD.

Its subcellular location is the cellular thylakoid membrane. The catalysed reaction is 2 reduced [2Fe-2S]-[ferredoxin] + NADP(+) + H(+) = 2 oxidized [2Fe-2S]-[ferredoxin] + NADPH. This Thermosynechococcus vestitus (strain NIES-2133 / IAM M-273 / BP-1) protein is Ferredoxin--NADP reductase (petH).